A 393-amino-acid polypeptide reads, in one-letter code: Protein TsgA (393 aa).

The next 12 helical transmembrane spans lie at 11 to 31 (WISF…GMVM), 51 to 71 (FLNA…EIVP), 78 to 98 (FGFI…SLAL), 101 to 121 (AAMF…TFLI), 134 to 154 (LLFT…VAAF), 162 to 182 (WYWV…LTFG), 206 to 226 (IGVL…LGFI), 245 to 265 (ALVS…SFIL), 273 to 293 (ILTV…TGTQ), 298 to 318 (WFIL…ITLG), 332 to 352 (FILT…GPIV), and 361 to 381 (LLTA…LGFV).

It belongs to the major facilitator superfamily. TsgA family.

Its subcellular location is the cell inner membrane. The polypeptide is Protein TsgA (Salmonella heidelberg (strain SL476)).